We begin with the raw amino-acid sequence, 622 residues long: Presenilin-A (622 aa).

Residues 1–16 (MKENEDEINKTDEKYK) show a composition bias toward basic and acidic residues. Disordered regions lie at residues 1–65 (MKEN…NLEN) and 132–160 (VSEQNSDECGSKVDKDLDEDDDDDDDETE). The Cytoplasmic segment spans residues 1–168 (MKENEDEINK…TEVPELVDYS (168 aa)). A compositionally biased stretch (low complexity) spans 21-62 (SNNGNNKNKNNNNNNNNNNNNNNNNNNNNNNNNNNNNNGNSN). Acidic residues predominate over residues 147 to 160 (DLDEDDDDDDDETE). The helical transmembrane segment at 169–189 (EMIVSILYPVCITMVIVVLAI) threads the bilayer. Topologically, residues 190–227 (RAISSSTSKNSQIVEISNDNSGGNGDSSSGADKMVFDS) are lumenal. The chain crosses the membrane as a helical span at residues 228-248 (VVNSLIFLAVIILSTTIMVVL). Residues 249–265 (YKFKLMKALYAWLMGTS) lie on the Cytoplasmic side of the membrane. A helical membrane pass occupies residues 266–286 (ILLLGVFGGFLFLILLAYLNL). Topologically, residues 287 to 289 (GLD) are lumenal. The chain crosses the membrane as a helical span at residues 290-310 (YVTFVIVVWNFSVGGIVCIFW). Position 311 (Y311) is a topological domain, cytoplasmic. The helical transmembrane segment at 312 to 332 (SPKLLNQGYLISISVLMALFF) threads the bilayer. The Lumenal portion of the chain corresponds to 333–341 (SRLPDWTTW). The chain crosses the membrane as a helical span at residues 342–362 (GILSIVSIYDIFAVLCPGGPL). D351 is an active-site residue. Residues 363–538 (RILIETAQKR…SYVKPKQSIR (176 aa)) lie on the Cytoplasmic side of the membrane. The tract at residues 419 to 477 (NNNNNEDENKNNTEDGNNNNNKNKNNNNNNNNRIENENGAENSSENGSITPPPTIPNFI) is disordered. Over residues 432-466 (EDGNNNNNKNKNNNNNNNNRIENENGAENSSENGS) the composition is skewed to low complexity. Residues 539 to 559 (LGLGDFVFYSVLIGKAASYQI) traverse the membrane as a helical segment. D543 is an active-site residue. Over 560 to 562 (TTV) the chain is Lumenal. Residues 563-583 (FTVFIAIITGLFLTLILLAVF) traverse the membrane as a helical segment. Residues 584–588 (RRALP) lie on the Cytoplasmic side of the membrane. The PAL motif lies at 588–590 (PAL). An intramembrane region (helical) is located at residues 589–609 (ALPMSIIFGIIVFFLTFKILI). Over 610–622 (QYIYFLGENQIFV) the chain is Cytoplasmic.

The protein belongs to the peptidase A22A family. As to quaternary structure, homodimer. Component of the gamma-secretase complex, a complex composed of a presenilin homodimer, nicastrin, aph1 and pen2.

Its subcellular location is the endoplasmic reticulum membrane. The protein localises to the golgi apparatus membrane. Probable catalytic subunit of the gamma-secretase complex, an endoprotease complex that catalyzes the intramembrane cleavage of integral membrane proteins such as Notch receptors. Requires the other members of the gamma-secretase complex to have a protease activity. The chain is Presenilin-A (psenA) from Dictyostelium discoideum (Social amoeba).